The chain runs to 275 residues: MSATGQSKRLAVPDIAARKGREPVAVLTAYTVSMARLLDPHVEVLLVGDSLGMVLYGFDSTLPVTLDMMIAHGAAVVRGSSRACVVVDMPWASYQEGREQAFRNAARILAETGCAAVKLEGGEEMAETVDFLVRRGIPVMGHVGLTPQAVNALGGYRARGRSDAEQAKILGDARAVAEAGAFALVVEGVVEPLARAVTEAVPCVTIGIGASAACDGQVLVSDDLLGLYGAFTPKFVRRYAELGPVIEEAAATYAADVRARRFPGTEHVFAARKAS.

Mg(2+) contacts are provided by Asp-49 and Asp-88. Residues 49-50 (DS), Asp-88, and Lys-118 each bind 3-methyl-2-oxobutanoate. Glu-120 contributes to the Mg(2+) binding site. Glu-187 serves as the catalytic Proton acceptor.

The protein belongs to the PanB family. Homodecamer; pentamer of dimers. The cofactor is Mg(2+).

The protein localises to the cytoplasm. The enzyme catalyses 3-methyl-2-oxobutanoate + (6R)-5,10-methylene-5,6,7,8-tetrahydrofolate + H2O = 2-dehydropantoate + (6S)-5,6,7,8-tetrahydrofolate. It functions in the pathway cofactor biosynthesis; (R)-pantothenate biosynthesis; (R)-pantoate from 3-methyl-2-oxobutanoate: step 1/2. Functionally, catalyzes the reversible reaction in which hydroxymethyl group from 5,10-methylenetetrahydrofolate is transferred onto alpha-ketoisovalerate to form ketopantoate. The protein is 3-methyl-2-oxobutanoate hydroxymethyltransferase of Rhodospirillum centenum (strain ATCC 51521 / SW).